A 413-amino-acid polypeptide reads, in one-letter code: Multifunctional CCA protein (413 aa).

The ATP site is built by Gly-8 and Arg-11. Positions 8 and 11 each coordinate CTP. Mg(2+) is bound by residues Asp-21 and Asp-23. ATP contacts are provided by Arg-91, Arg-143, and Arg-146. Residues Arg-91, Arg-143, and Arg-146 each coordinate CTP. In terms of domain architecture, HD spans 232–333 (TGVHVMMVVD…VRFFERSDAL (102 aa)).

The protein belongs to the tRNA nucleotidyltransferase/poly(A) polymerase family. Bacterial CCA-adding enzyme type 1 subfamily. As to quaternary structure, monomer. Can also form homodimers and oligomers. Mg(2+) serves as cofactor. Ni(2+) is required as a cofactor.

It catalyses the reaction a tRNA precursor + 2 CTP + ATP = a tRNA with a 3' CCA end + 3 diphosphate. The catalysed reaction is a tRNA with a 3' CCA end + 2 CTP + ATP = a tRNA with a 3' CCACCA end + 3 diphosphate. Functionally, catalyzes the addition and repair of the essential 3'-terminal CCA sequence in tRNAs without using a nucleic acid template. Adds these three nucleotides in the order of C, C, and A to the tRNA nucleotide-73, using CTP and ATP as substrates and producing inorganic pyrophosphate. tRNA 3'-terminal CCA addition is required both for tRNA processing and repair. Also involved in tRNA surveillance by mediating tandem CCA addition to generate a CCACCA at the 3' terminus of unstable tRNAs. While stable tRNAs receive only 3'-terminal CCA, unstable tRNAs are marked with CCACCA and rapidly degraded. The protein is Multifunctional CCA protein of Burkholderia ambifaria (strain ATCC BAA-244 / DSM 16087 / CCUG 44356 / LMG 19182 / AMMD) (Burkholderia cepacia (strain AMMD)).